Reading from the N-terminus, the 577-residue chain is Thiol:disulfide interchange protein DsbD (577 aa).

Residues 1-23 (MAQRIFTLIFLLWTAVGTPQVAA) form the signal peptide. 2 disulfide bridges follow: cysteine 131–cysteine 137 and cysteine 194–cysteine 316. Helical transmembrane passes span 182–202 (ALLI…YPLI), 225–245 (YVQG…AAGL), 255–275 (YILI…FGLY), 308–328 (LAGL…LLYI), 338–358 (GGTL…VTLF), 369–389 (WMQY…VFLL), and 396–416 (AWGI…ALML). The Thioredoxin domain occupies 437–577 (VISAKPLQDW…FQAHLQKFSP (141 aa)). Cysteine 492 and cysteine 495 form a disulfide bridge.

The protein belongs to the thioredoxin family. DsbD subfamily.

Its subcellular location is the cell inner membrane. The catalysed reaction is [protein]-dithiol + NAD(+) = [protein]-disulfide + NADH + H(+). The enzyme catalyses [protein]-dithiol + NADP(+) = [protein]-disulfide + NADPH + H(+). In terms of biological role, required to facilitate the formation of correct disulfide bonds in some periplasmic proteins and for the assembly of the periplasmic c-type cytochromes. Acts by transferring electrons from cytoplasmic thioredoxin to the periplasm. This transfer involves a cascade of disulfide bond formation and reduction steps. The protein is Thiol:disulfide interchange protein DsbD of Pectobacterium atrosepticum (strain SCRI 1043 / ATCC BAA-672) (Erwinia carotovora subsp. atroseptica).